A 362-amino-acid chain; its full sequence is Alternative oxidase, mitochondrial (362 aa).

Residues 1-64 (MNTPKVNILH…RNFSTTSVTR (64 aa)) constitute a mitochondrion transit peptide. The chain crosses the membrane as a helical span at residues 156–176 (LVRFIFLESIAGVPGMVAGML). Fe cation contacts are provided by Glu163, Glu202, and His205. The helical transmembrane segment at 222 to 242 (LILGAQGVFFNAMFLSYLISP) threads the bilayer. Residues Glu253, Glu310, and His313 each contribute to the Fe cation site.

Belongs to the alternative oxidase family. In terms of assembly, homodimer; disulfide-linked. It depends on Fe cation as a cofactor.

The protein resides in the mitochondrion inner membrane. Functionally, catalyzes cyanide-resistant oxygen consumption. May increase respiration when the cytochrome respiratory pathway is restricted, or in response to low temperatures. This Neurospora crassa (strain ATCC 24698 / 74-OR23-1A / CBS 708.71 / DSM 1257 / FGSC 987) protein is Alternative oxidase, mitochondrial (aod-1).